We begin with the raw amino-acid sequence, 292 residues long: Ferric aerobactin-binding protein VatD (292 aa).

A signal peptide spans 1–12; it reads MLSAALAFNSYA. A Fe/B12 periplasmic-binding domain is found at 30 to 292; the sequence is KVVALDWVLT…HITGRLTQPQ (263 aa). The desferrioxamine B site is built by Trp-61, Arg-77, Tyr-118, Arg-185, Trp-213, Phe-215, Trp-269, and Phe-271.

It belongs to the bacterial solute-binding protein 8 family. The complex is composed of two ATP-binding proteins (VatC), two transmembrane proteins (VatB) and a solute-binding protein (VatD).

Its subcellular location is the periplasm. Its function is as follows. Part of the ABC transporter complex VatCDB involved in the import of iron(3+)-complexed aerobactin, a citrate-hydroxamate siderophore produced by other bacteria. Binds the iron(3+)-aerobactin complex and transfers it to the membrane-bound permease. Functions in the import of iron(3+)-complexed vulnibactin, a catecholate siderophore synthesized by V.vulnificus, in the absence of FatB. In Vibrio vulnificus, this protein is Ferric aerobactin-binding protein VatD.